The sequence spans 549 residues: Lipase 3 (549 aa).

A signal peptide spans 1–15; it reads MKLALALSLIASVAA. C75 and C112 are oxidised to a cystine. S224 functions as the Acyl-ester intermediate in the catalytic mechanism. Residues C283 and C292 are joined by a disulfide bond. N329 carries N-linked (GlcNAc...) asparagine glycosylation. E356 acts as the Charge relay system in catalysis. N366 carries N-linked (GlcNAc...) asparagine glycosylation. H464 acts as the Charge relay system in catalysis.

The protein belongs to the type-B carboxylesterase/lipase family. As to quaternary structure, monomer and homodimer.

The enzyme catalyses a triacylglycerol + H2O = a diacylglycerol + a fatty acid + H(+). The sequence is that of Lipase 3 (LIP3) from Diutina rugosa (Yeast).